Here is a 957-residue protein sequence, read N- to C-terminus: PE-PGRS family protein PE_PGRS3 (957 aa).

Residues 4-94 enclose the PE domain; that stretch reads VIAAPEVIAA…GAYAAAEAAA (91 aa). Positions 893–925 are enriched in basic residues; that stretch reads CRRQRRADRQRRQRRQRRQSRGHARCRRHRRAA. The tract at residues 893–957 is disordered; the sequence is CRRQRRADRQ…GISCSPQMMP (65 aa).

It belongs to the mycobacterial PE family. PGRS subfamily. In terms of processing, a cleavage of the protein removes the N-terminal 120-150 residues, immediately upstream the PGRS domain. The exact position of the cleavage site could not be identified.

The protein localises to the cell outer membrane. It is found in the secreted. Its subcellular location is the cell wall. It localises to the cell surface. In terms of biological role, the arginine-rich C-terminal region protrudes from the mycobacterial membrane and mediates M.tuberculosis entry into host epithelial cells. May serve as a bridge between mycobacteria and host cells by interacting with specific host phospholipids and extracting them from host cells, for their direct integration or as a source of phosphate, during phases of TB pathogenesis when M.tuberculosis is short of phosphate supply. The sequence is that of PE-PGRS family protein PE_PGRS3 from Mycobacterium tuberculosis (strain ATCC 25618 / H37Rv).